Here is a 330-residue protein sequence, read N- to C-terminus: MAVISELKRHHPKTGLLRYLPTGVVPYGELVRIHRALGYYLNTSPYVVGIAYTAATAETKLPLDLLLDRLLLLTLWSLILRSAGCAWNDLVDVDIDRQISRTQSRPLPRGAISLSAATIFTACLFVLGCSLLLFLPRECLFDAGIKVFFALLYPFGKRFTDHPQLILINIAWAIPMAMHSLGMEPSSQILSMLCMCVFFSAVIVMIDLVYSRQDTEEDLKVGVKSMAVRYRNCVETMAYSLFAISSLALLFGGVLGGLRVPFVLFSVGGHIVGFWRFLRASLQAGPAGVESRAKSSCLIASVFWVLGLGIEYAEMVKEKDNPTDKKKHPH.

Transmembrane regions (helical) follow at residues 116–136 (AATI…LFLP), 165–185 (LILI…GMEP), 189–209 (ILSM…IDLV), 238–258 (AYSL…LGGL), and 260–280 (VPFV…FLRA).

Belongs to the UbiA prenyltransferase family. Requires Mg(2+) as cofactor.

The protein localises to the membrane. The enzyme catalyses 3,5-dimethylorsellinate + (2E,6E)-farnesyl diphosphate = (3R)-3-farnesyl-6-hydroxy-2,3,5-trimethyl-4-oxocyclohexa-1,5-diene-1-carboxylate + diphosphate + H(+). The protein operates within secondary metabolite biosynthesis; terpenoid biosynthesis. In terms of biological role, polyprenyl transferase; part of the gene cluster B that mediates the biosynthesis of austinol and dehydroaustinol, two fungal meroterpenoids. The first step of the pathway is the synthesis of 3,5-dimethylorsellinic acid by the polyketide synthase ausA. 3,5-dimethylorsellinic acid is then prenylated by the polyprenyl transferase ausN. Further epoxidation by the FAD-dependent monooxygenase ausM and cyclization by the probable terpene cyclase ausL lead to the formation of protoaustinoid A. Protoaustinoid A is then oxidized to spiro-lactone preaustinoid A3 by the combined action of the FAD-binding monooxygenases ausB and ausC, and the dioxygenase ausE. Acid-catalyzed keto-rearrangement and ring contraction of the tetraketide portion of preaustinoid A3 by ausJ lead to the formation of preaustinoid A4. The aldo-keto reductase ausK, with the help of ausH, is involved in the next step by transforming preaustinoid A4 into isoaustinone which is in turn hydroxylated by the P450 monooxygenase ausI to form austinolide. Finally, the cytochrome P450 monooxygenase ausG modifies austinolide to austinol. Austinol can be further modified to dehydroaustinol which forms a diffusible complex with diorcinol that initiates conidiation. Due to genetic rearrangements of the clusters and the subsequent loss of some enzymes, the end products of the Emericella nidulans austinoid biosynthesis clusters are austinol and dehydroaustinol, even if additional enzymes, such as the O-acetyltransferase ausQ and the cytochrome P450 monooxygenase ausR are still functional. The polypeptide is Polyprenyl transferase ausN (Emericella nidulans (strain FGSC A4 / ATCC 38163 / CBS 112.46 / NRRL 194 / M139) (Aspergillus nidulans)).